The primary structure comprises 298 residues: uncharacterized protein (298 aa).

The segment at 264-298 is disordered; sequence APPPPLPCITTGPAALEDSPKASKANKGKKAKAKK. Basic residues predominate over residues 287-298; that stretch reads KANKGKKAKAKK.

This is an uncharacterized protein from Mus musculus (Mouse).